The primary structure comprises 285 residues: Polyamine aminopropyltransferase (285 aa).

In terms of domain architecture, PABS spans 5–241 (DNWYIEHFQP…GWWSVTMASK (237 aa)). Position 35 (Q35) interacts with S-methyl-5'-thioadenosine. Spermidine contacts are provided by H66 and D90. Residues D110 and 141-142 (DG) contribute to the S-methyl-5'-thioadenosine site. The active-site Proton acceptor is the D160. Spermidine is bound at residue 160-163 (DSTD). P167 contributes to the S-methyl-5'-thioadenosine binding site.

The protein belongs to the spermidine/spermine synthase family. As to quaternary structure, homodimer or homotetramer.

Its subcellular location is the cytoplasm. It carries out the reaction S-adenosyl 3-(methylsulfanyl)propylamine + putrescine = S-methyl-5'-thioadenosine + spermidine + H(+). It functions in the pathway amine and polyamine biosynthesis; spermidine biosynthesis; spermidine from putrescine: step 1/1. Its function is as follows. Catalyzes the irreversible transfer of a propylamine group from the amino donor S-adenosylmethioninamine (decarboxy-AdoMet) to putrescine (1,4-diaminobutane) to yield spermidine. This chain is Polyamine aminopropyltransferase, found in Xanthomonas euvesicatoria pv. vesicatoria (strain 85-10) (Xanthomonas campestris pv. vesicatoria).